Here is a 558-residue protein sequence, read N- to C-terminus: Aurovertin biosynthesis cluster transcription factor aurF (558 aa).

This sequence belongs to the POU transcription factor family. Class-3 subfamily.

The protein localises to the nucleus. Transcription factor that regulates the expression of the gene cluster that mediates the biosynthesis of aurovertins, fungal polyketides that exhibit potent inhibition of adenosine triphosphate synthase. The polypeptide is Aurovertin biosynthesis cluster transcription factor aurF (Calcarisporium arbuscula (Dendryphion arbuscula)).